A 189-amino-acid chain; its full sequence is Large ribosomal subunit protein bL9 (189 aa).

This sequence belongs to the bacterial ribosomal protein bL9 family.

Binds to the 23S rRNA. The polypeptide is Large ribosomal subunit protein bL9 (Brucella abortus (strain S19)).